The primary structure comprises 487 residues: Cobyric acid synthase (487 aa).

The region spanning 251–439 (KLKVVAPAYP…CHGVLDHPEA (189 aa)) is the GATase cobBQ-type domain. The active-site Nucleophile is the Cys332. Residue His431 is part of the active site.

It belongs to the CobB/CobQ family. CobQ subfamily.

Its pathway is cofactor biosynthesis; adenosylcobalamin biosynthesis. In terms of biological role, catalyzes amidations at positions B, D, E, and G on adenosylcobyrinic A,C-diamide. NH(2) groups are provided by glutamine, and one molecule of ATP is hydrogenolyzed for each amidation. In Dechloromonas aromatica (strain RCB), this protein is Cobyric acid synthase.